Here is a 555-residue protein sequence, read N- to C-terminus: E3 ubiquitin-protein ligase ARIH1 (555 aa).

Acidic residues predominate over residues 1 to 47 (MDSDEGYNYEFDEDEECSEEDSGAEEEEDDDEDEPDDDNLDLGEVEL). Residues 1–93 (MDSDEGYNYE…GGGGGPGHEQ (93 aa)) are disordered. Residues 65–90 (ETGGGGGSALGPGGGGGGGGGGGGPG) are compositionally biased toward gly residues. Residues 103–151 (TAEQILQHMVECIREVNEVIQNPATITRILLSHFNWDKEKLMERYFDGN) are UBA-like. Position 140 is an N6-acetyllysine (lysine 140). The TRIAD supradomain stretch occupies residues 180–391 (QDMPCQICYL…SAWYNCNRYN (212 aa)). Zn(2+)-binding residues include cysteine 184, cysteine 187, cysteine 201, histidine 203, cysteine 206, cysteine 209, cysteine 229, cysteine 234, cysteine 274, cysteine 279, cysteine 295, cysteine 297, cysteine 302, cysteine 305, histidine 310, cysteine 315, cysteine 342, and cysteine 345. The RING-type 1 zinc-finger motif lies at 184–234 (CQICYLNYPNSYFTGLECGHKFCMQCWSEYLTTKIMEEGMGQTISCPAHGC). An IBR-type zinc finger spans residues 254–315 (LKYQHLITNS…GENWHDPVKC (62 aa)). The segment at 342–373 (CPKCHVTIEKDGGCNHMVCRNQNCKAEFCWVC) adopts an RING-type 2; atypical zinc-finger fold. The active site involves cysteine 355. Residues cysteine 360, cysteine 365, cysteine 370, cysteine 373, histidine 380, and cysteine 387 each contribute to the Zn(2+) site. Residues 406-555 (RAALQRYLFY…EKDLWEYIED (150 aa)) form an ariadne domain region.

It belongs to the RBR family. Ariadne subfamily. In terms of assembly, interacts (via the first RING-type zinc finger) with UBE2L3. Associates with cullin-RING ubiquitin ligase (CRL) complexes containing CUL1, CUL2 and CUL3. Interacts with neddylated CUL1. Interacts with neddylated CUL2. Interacts with neddylated CUL3. Interacts with neddylated CUL4A. Widely expressed.

Its subcellular location is the cytoplasm. It localises to the nucleus. The protein localises to the cajal body. The enzyme catalyses [E2 ubiquitin-conjugating enzyme]-S-ubiquitinyl-L-cysteine + [acceptor protein]-L-lysine = [E2 ubiquitin-conjugating enzyme]-L-cysteine + [acceptor protein]-N(6)-ubiquitinyl-L-lysine.. It functions in the pathway protein modification; protein ubiquitination. Its activity is regulated as follows. Autoinhibited by the ariadne domain, which masks the second RING-type zinc finger that contains the active site and inhibits the E3 activity. Inhibition is relieved upon binding to neddylated cullin-RING ubiquitin ligase complexes, which activate the E3 ligase activity of ARIH1. E3 ubiquitin-protein ligase, which catalyzes ubiquitination of target proteins together with ubiquitin-conjugating enzyme E2 UBE2L3. Acts as an atypical E3 ubiquitin-protein ligase by working together with cullin-RING ubiquitin ligase (CRL) complexes and initiating ubiquitination of CRL substrates: associates with CRL complexes and specifically mediates addition of the first ubiquitin on CRLs targets. The initial ubiquitin is then elongated by CDC34/UBE2R1 and UBE2R2. E3 ubiquitin-protein ligase activity is activated upon binding to neddylated cullin-RING ubiquitin ligase complexes. Plays a role in protein translation in response to DNA damage by mediating ubiquitination of EIF4E2, the consequences of EIF4E2 ubiquitination are however unclear. According to a report, EIF4E2 ubiquitination leads to promote EIF4E2 cap-binding and protein translation arrest. According to another report EIF4E2 ubiquitination leads to its subsequent degradation. Acts as the ligase involved in ISGylation of EIF4E2. In vitro, controls the degradation of the LINC (LInker of Nucleoskeleton and Cytoskeleton) complex member SUN2 and may therefore have a role in the formation and localization of the LINC complex, and as a consequence, may act in nuclear subcellular localization and nuclear morphology. The sequence is that of E3 ubiquitin-protein ligase ARIH1 (Arih1) from Mus musculus (Mouse).